Reading from the N-terminus, the 332-residue chain is Holliday junction branch migration complex subunit RuvB (332 aa).

A large ATPase domain (RuvB-L) region spans residues M1–Y181. Positions 20, 21, 62, 65, 66, 67, 171, 181, and 218 each coordinate ATP. Residue T66 coordinates Mg(2+). A small ATPAse domain (RuvB-S) region spans residues N182–G252. A head domain (RuvB-H) region spans residues S255–I332. DNA is bound by residues R291, R310, and R315.

It belongs to the RuvB family. In terms of assembly, homohexamer. Forms an RuvA(8)-RuvB(12)-Holliday junction (HJ) complex. HJ DNA is sandwiched between 2 RuvA tetramers; dsDNA enters through RuvA and exits via RuvB. An RuvB hexamer assembles on each DNA strand where it exits the tetramer. Each RuvB hexamer is contacted by two RuvA subunits (via domain III) on 2 adjacent RuvB subunits; this complex drives branch migration. In the full resolvosome a probable DNA-RuvA(4)-RuvB(12)-RuvC(2) complex forms which resolves the HJ.

It is found in the cytoplasm. The catalysed reaction is ATP + H2O = ADP + phosphate + H(+). In terms of biological role, the RuvA-RuvB-RuvC complex processes Holliday junction (HJ) DNA during genetic recombination and DNA repair, while the RuvA-RuvB complex plays an important role in the rescue of blocked DNA replication forks via replication fork reversal (RFR). RuvA specifically binds to HJ cruciform DNA, conferring on it an open structure. The RuvB hexamer acts as an ATP-dependent pump, pulling dsDNA into and through the RuvAB complex. RuvB forms 2 homohexamers on either side of HJ DNA bound by 1 or 2 RuvA tetramers; 4 subunits per hexamer contact DNA at a time. Coordinated motions by a converter formed by DNA-disengaged RuvB subunits stimulates ATP hydrolysis and nucleotide exchange. Immobilization of the converter enables RuvB to convert the ATP-contained energy into a lever motion, pulling 2 nucleotides of DNA out of the RuvA tetramer per ATP hydrolyzed, thus driving DNA branch migration. The RuvB motors rotate together with the DNA substrate, which together with the progressing nucleotide cycle form the mechanistic basis for DNA recombination by continuous HJ branch migration. Branch migration allows RuvC to scan DNA until it finds its consensus sequence, where it cleaves and resolves cruciform DNA. The sequence is that of Holliday junction branch migration complex subunit RuvB from Fusobacterium nucleatum subsp. nucleatum (strain ATCC 25586 / DSM 15643 / BCRC 10681 / CIP 101130 / JCM 8532 / KCTC 2640 / LMG 13131 / VPI 4355).